Reading from the N-terminus, the 419-residue chain is GTPase Obg (419 aa).

Positions 1 to 156 (MRFVDYVSIE…FYLDLQLKVM (156 aa)) constitute an Obg domain. The 178-residue stretch at 157–334 (ADIGLVGKPN…LEEKQKKLEI (178 aa)) folds into the OBG-type G domain. Residues 163–170 (GKPNAGKS), 188–192 (FTTLV), 209–212 (DLPG), 278–281 (NKCD), and 315–317 (NII) contribute to the GTP site. Residues Ser-170 and Thr-190 each coordinate Mg(2+). The region spanning 342-419 (IEFNLKAPFL…RIYEFEFHWN (78 aa)) is the OCT domain.

It belongs to the TRAFAC class OBG-HflX-like GTPase superfamily. OBG GTPase family. Monomer. Mg(2+) is required as a cofactor.

It localises to the cytoplasm. An essential GTPase which binds GTP, GDP and possibly (p)ppGpp with moderate affinity, with high nucleotide exchange rates and a fairly low GTP hydrolysis rate. Plays a role in control of the cell cycle, stress response, ribosome biogenesis and in those bacteria that undergo differentiation, in morphogenesis control. This chain is GTPase Obg, found in Mesomycoplasma hyopneumoniae (strain 232) (Mycoplasma hyopneumoniae).